The following is a 522-amino-acid chain: Maturase K (522 aa).

This sequence belongs to the intron maturase 2 family. MatK subfamily.

It localises to the plastid. The protein localises to the chloroplast. In terms of biological role, usually encoded in the trnK tRNA gene intron. Probably assists in splicing its own and other chloroplast group II introns. The protein is Maturase K of Dianella ensifolia (Flax lily).